The primary structure comprises 142 residues: Hemoglobin subunit alpha (142 aa).

An N-acetylserine modification is found at Ser-1. Residues 1 to 142 form the Globin domain; sequence SLSEKNKAAV…VALALADRYR (142 aa). His-59 is an O2 binding site. Residue His-88 participates in heme b binding.

The protein belongs to the globin family. Heterotetramer of two alpha chains and two beta chains. In terms of tissue distribution, red blood cells.

In terms of biological role, involved in oxygen transport from gills to the various peripheral tissues. The chain is Hemoglobin subunit alpha (hba) from Pagothenia borchgrevinki (Bald rockcod).